The primary structure comprises 299 residues: Bifunctional phosphoglucose/phosphomannose isomerase (299 aa).

The SIS domain maps to 27–177 (DEVEITPSSR…IHKLMEDFQK (151 aa)). Residues glycine 44, serine 45, serine 84, serine 86, threonine 89, and arginine 132 each contribute to the D-fructose 6-phosphate site. Glutamate 200 functions as the Proton acceptor in the catalytic mechanism. 2 residues coordinate D-fructose 6-phosphate: histidine 216 and lysine 295. The Proton donor role is filled by histidine 216. The active-site Proton acceptor is the lysine 295.

It belongs to the PGI/PMI family. In terms of assembly, homodimer.

The enzyme catalyses alpha-D-glucose 6-phosphate = beta-D-fructose 6-phosphate. It catalyses the reaction D-mannose 6-phosphate = D-fructose 6-phosphate. Its activity is regulated as follows. Presence or absence of metal ions or EDTA does not significantly affect the phosphoglucose isomerase activity. Dual specificity isomerase that catalyzes the isomerization of both glucose-6-phosphate and mannose-6-phosphate to fructose-6-phosphate with nearly similar catalytic efficiency. Also catalyzes the epimerization of mannose 6-phosphate to glucose 6-phosphate but the rate of epimerization reaction is 20-fold lower than that of isomerization reaction. The protein is Bifunctional phosphoglucose/phosphomannose isomerase of Pyrobaculum calidifontis (strain DSM 21063 / JCM 11548 / VA1).